Consider the following 1590-residue polypeptide: Pentafunctional AROM polypeptide (1590 aa).

Positions Met1–Asp400 are 3-dehydroquinate synthase. Residues Asp49–Asn51, Glu96–Lys99, Gly127–Val129, and Asp132 each bind NAD(+). Arg143 contacts 7-phospho-2-dehydro-3-deoxy-D-arabino-heptonate. Thr152 to Thr153 provides a ligand contact to NAD(+). Residues Asp159 and Lys165 each coordinate 7-phospho-2-dehydro-3-deoxy-D-arabino-heptonate. Lys174 provides a ligand contact to NAD(+). Asn175 contacts 7-phospho-2-dehydro-3-deoxy-D-arabino-heptonate. Residues Phe192–Thr195 and Asn203 each bind NAD(+). Glu207 provides a ligand contact to Zn(2+). Residues Glu207–Lys210 and Lys266 contribute to the 7-phospho-2-dehydro-3-deoxy-D-arabino-heptonate site. Catalysis depends on Glu276, which acts as the Proton acceptor; for 3-dehydroquinate synthase activity. Residues Arg280–Asn284 and His287 contribute to the 7-phospho-2-dehydro-3-deoxy-D-arabino-heptonate site. Zn(2+) is bound at residue His287. His291 functions as the Proton acceptor; for 3-dehydroquinate synthase activity in the catalytic mechanism. Positions 303 and 372 each coordinate 7-phospho-2-dehydro-3-deoxy-D-arabino-heptonate. His303 is a binding site for Zn(2+). The segment at Val413–Val856 is EPSP synthase. The active-site For EPSP synthase activity is the Cys838. A shikimate kinase region spans residues Asn876–Ser1070. Gly883–Ser890 contacts ATP. The interval Leu1071–Glu1285 is 3-dehydroquinase. His1187 (proton acceptor; for 3-dehydroquinate dehydratase activity) is an active-site residue. Lys1215 (schiff-base intermediate with substrate; for 3-dehydroquinate dehydratase activity) is an active-site residue. Residues Lys1298–Ser1590 are shikimate dehydrogenase.

In the N-terminal section; belongs to the sugar phosphate cyclases superfamily. Dehydroquinate synthase family. It in the 2nd section; belongs to the EPSP synthase family. The protein in the 3rd section; belongs to the shikimate kinase family. This sequence in the 4th section; belongs to the type-I 3-dehydroquinase family. In the C-terminal section; belongs to the shikimate dehydrogenase family. As to quaternary structure, homodimer. Zn(2+) is required as a cofactor.

It localises to the cytoplasm. It carries out the reaction 7-phospho-2-dehydro-3-deoxy-D-arabino-heptonate = 3-dehydroquinate + phosphate. It catalyses the reaction 3-dehydroquinate = 3-dehydroshikimate + H2O. The catalysed reaction is shikimate + NADP(+) = 3-dehydroshikimate + NADPH + H(+). The enzyme catalyses shikimate + ATP = 3-phosphoshikimate + ADP + H(+). It carries out the reaction 3-phosphoshikimate + phosphoenolpyruvate = 5-O-(1-carboxyvinyl)-3-phosphoshikimate + phosphate. It participates in metabolic intermediate biosynthesis; chorismate biosynthesis; chorismate from D-erythrose 4-phosphate and phosphoenolpyruvate: step 2/7. The protein operates within metabolic intermediate biosynthesis; chorismate biosynthesis; chorismate from D-erythrose 4-phosphate and phosphoenolpyruvate: step 3/7. It functions in the pathway metabolic intermediate biosynthesis; chorismate biosynthesis; chorismate from D-erythrose 4-phosphate and phosphoenolpyruvate: step 4/7. Its pathway is metabolic intermediate biosynthesis; chorismate biosynthesis; chorismate from D-erythrose 4-phosphate and phosphoenolpyruvate: step 5/7. It participates in metabolic intermediate biosynthesis; chorismate biosynthesis; chorismate from D-erythrose 4-phosphate and phosphoenolpyruvate: step 6/7. Functionally, the AROM polypeptide catalyzes 5 consecutive enzymatic reactions in prechorismate polyaromatic amino acid biosynthesis. The sequence is that of Pentafunctional AROM polypeptide from Pyricularia oryzae (strain 70-15 / ATCC MYA-4617 / FGSC 8958) (Rice blast fungus).